The primary structure comprises 769 residues: Glutathione biosynthesis bifunctional protein GshAB (769 aa).

Residues 1–347 (MLDSFKENEA…QLADENENNI (347 aa)) are glutamate--cysteine ligase. One can recognise an ATP-grasp domain in the interval 514–768 (KLVLAEHGIR…IGDKILDFLF (255 aa)). Position 541–599 (541–599 (SLFEDKQIVVKPKSTNYGWGISIFKNKFTLEDYQEALNIAFSYDSSVIIEEFIPGDEFR)) interacts with ATP. Residues D721, E738, and N740 each contribute to the Mg(2+) site. Positions 721, 738, and 740 each coordinate Mn(2+).

It in the N-terminal section; belongs to the glutamate--cysteine ligase type 1 family. Type 2 subfamily. In terms of assembly, monomer. Mg(2+) is required as a cofactor. Mn(2+) serves as cofactor.

The enzyme catalyses L-cysteine + L-glutamate + ATP = gamma-L-glutamyl-L-cysteine + ADP + phosphate + H(+). It carries out the reaction gamma-L-glutamyl-L-cysteine + glycine + ATP = glutathione + ADP + phosphate + H(+). It participates in sulfur metabolism; glutathione biosynthesis; glutathione from L-cysteine and L-glutamate: step 1/2. It functions in the pathway sulfur metabolism; glutathione biosynthesis; glutathione from L-cysteine and L-glutamate: step 2/2. Its function is as follows. Synthesizes glutathione from L-glutamate and L-cysteine via gamma-L-glutamyl-L-cysteine. The sequence is that of Glutathione biosynthesis bifunctional protein GshAB from Listeria innocua serovar 6a (strain ATCC BAA-680 / CLIP 11262).